Here is a 197-residue protein sequence, read N- to C-terminus: Imidazoleglycerol-phosphate dehydratase (197 aa).

This sequence belongs to the imidazoleglycerol-phosphate dehydratase family.

The protein localises to the cytoplasm. The enzyme catalyses D-erythro-1-(imidazol-4-yl)glycerol 3-phosphate = 3-(imidazol-4-yl)-2-oxopropyl phosphate + H2O. Its pathway is amino-acid biosynthesis; L-histidine biosynthesis; L-histidine from 5-phospho-alpha-D-ribose 1-diphosphate: step 6/9. This is Imidazoleglycerol-phosphate dehydratase from Leptospira biflexa serovar Patoc (strain Patoc 1 / Ames).